The following is a 509-amino-acid chain: ATP synthase subunit beta (509 aa).

167 to 174 (GGAGVGKT) contacts ATP. Residues 476–509 (ESLGAKMEDTSGDGAPAQSDSKSDSKGDDADKDA) form a disordered region. Residues 496-509 (SKSDSKGDDADKDA) are compositionally biased toward basic and acidic residues.

The protein belongs to the ATPase alpha/beta chains family. In terms of assembly, F-type ATPases have 2 components, CF(1) - the catalytic core - and CF(0) - the membrane proton channel. CF(1) has five subunits: alpha(3), beta(3), gamma(1), delta(1), epsilon(1). CF(0) has three main subunits: a(1), b(2) and c(9-12). The alpha and beta chains form an alternating ring which encloses part of the gamma chain. CF(1) is attached to CF(0) by a central stalk formed by the gamma and epsilon chains, while a peripheral stalk is formed by the delta and b chains.

The protein localises to the cell membrane. The enzyme catalyses ATP + H2O + 4 H(+)(in) = ADP + phosphate + 5 H(+)(out). Its function is as follows. Produces ATP from ADP in the presence of a proton gradient across the membrane. The catalytic sites are hosted primarily by the beta subunits. The chain is ATP synthase subunit beta from Mycobacterium sp. (strain KMS).